The sequence spans 36 residues: Cytochrome b6-f complex subunit 5 (36 aa).

The chain crosses the membrane as a helical span at residues 5–25 (LLAGIVLGLVPVTLAGLFVAA).

Belongs to the PetG family. As to quaternary structure, the 4 large subunits of the cytochrome b6-f complex are cytochrome b6, subunit IV (17 kDa polypeptide, PetD), cytochrome f and the Rieske protein, while the 4 small subunits are PetG, PetL, PetM and PetN. The complex functions as a dimer.

Its subcellular location is the cellular thylakoid membrane. Its function is as follows. Component of the cytochrome b6-f complex, which mediates electron transfer between photosystem II (PSII) and photosystem I (PSI), cyclic electron flow around PSI, and state transitions. PetG is required for either the stability or assembly of the cytochrome b6-f complex. The protein is Cytochrome b6-f complex subunit 5 of Acaryochloris marina (strain MBIC 11017).